We begin with the raw amino-acid sequence, 224 residues long: Transmembrane emp24 domain-containing protein 7 (224 aa).

An N-terminal signal peptide occupies residues 1-34; it reads MPRPGSAQRWAAVAGRWGCRLLALLLLVPGPGGA. At 35–187 the chain is on the lumenal side; the sequence is SEITFELPDN…RAEDLNTRVA (153 aa). In terms of domain architecture, GOLD spans 46–128; the sequence is KQCFYEDIAQ…HKTVYFDFQV (83 aa). Asn-103 carries an N-linked (GlcNAc...) asparagine glycan. Residues 188–208 traverse the membrane as a helical segment; sequence YWSVGEALILLVVSIGQVFLL. The Cytoplasmic portion of the chain corresponds to 209 to 224; the sequence is KSFFSDKRTTTTRVGS. A COPII vesicle coat-binding motif is present at residues 211–212; sequence FF. The COPI vesicle coat-binding motif lies at 211 to 224; it reads FFSDKRTTTTRVGS.

The protein belongs to the EMP24/GP25L family. Predominantly monomeric and to lesser extent homodimeric in endoplasmic reticulum, endoplasmic reticulum-Golgi intermediate compartment and cis-Golgi network. Oligomerizes with other members of the EMP24/GP25L family such as TMED2, TMED9 and TMED10. Interacts (via C-terminus) with COPG1; the interaction involves dimeric TMED7. Post-translationally, N-linked glycosylated in complex form containing terminal sialic acid.

It is found in the endoplasmic reticulum membrane. Its subcellular location is the golgi apparatus. The protein resides in the cis-Golgi network membrane. The protein localises to the endoplasmic reticulum-Golgi intermediate compartment membrane. It localises to the cytoplasmic vesicle. It is found in the COPI-coated vesicle membrane. Its subcellular location is the COPII-coated vesicle membrane. Its function is as follows. Potential role in vesicular protein trafficking, mainly in the early secretory pathway. Appears to play a role in the biosynthesis of secreted cargo including processing and post-translational modifications. The chain is Transmembrane emp24 domain-containing protein 7 (TMED7) from Homo sapiens (Human).